The sequence spans 373 residues: Coiled-coil domain-containing protein 34 (373 aa).

Disordered regions lie at residues 1-112 (MWAA…SLRG) and 118-137 (CAST…QVRL). The residue at position 52 (serine 52) is a Phosphoserine. Positions 61–76 (NSTRSLLSPLGHQSFQ) are enriched in polar residues. The span at 77–101 (FDEDDGDGEDEEDVDDEEDVDEDAH) shows a compositional bias: acidic residues. A coiled-coil region spans residues 152–286 (KEKEERDRLQ…QEWLENAKHK (135 aa)). The interval 324–352 (IHMPPPKEAKDLSGRKSKRPVISQPHKSS) is disordered. The segment covering 328–337 (PPKEAKDLSG) has biased composition (basic and acidic residues).

Expressed in sperm.

It is found in the cell projection. The protein localises to the cilium. It localises to the flagellum. In terms of biological role, involved in spermatogenesis. Has a probable role in anterograde intraflagellar transport which is essential for the formation of sperm flagella. This Homo sapiens (Human) protein is Coiled-coil domain-containing protein 34 (CCDC34).